A 1256-amino-acid polypeptide reads, in one-letter code: Receptor tyrosine-protein kinase erbB-2 (1256 aa).

Positions Met1–Gly22 are cleaved as a signal peptide. Topologically, residues Thr23–Thr653 are extracellular. Cys26 and Cys53 are oxidised to a cystine. Residues Asn68, Asn125, and Asn188 are each glycosylated (N-linked (GlcNAc...) asparagine). 16 disulfides stabilise this stretch: Cys163–Cys193, Cys196–Cys205, Cys200–Cys213, Cys221–Cys228, Cys225–Cys236, Cys237–Cys245, Cys241–Cys253, Cys256–Cys265, Cys269–Cys296, Cys300–Cys312, Cys316–Cys332, Cys335–Cys339, Cys343–Cys368, Cys476–Cys505, Cys512–Cys521, and Cys516–Cys529. N-linked (GlcNAc...) asparagine glycosylation occurs at Asn260. N-linked (GlcNAc...) asparagine glycosylation occurs at Asn531. 8 disulfides stabilise this stretch: Cys532/Cys541, Cys545/Cys561, Cys564/Cys577, Cys568/Cys585, Cys588/Cys597, Cys601/Cys624, Cys627/Cys635, and Cys631/Cys643. Asn572 carries an N-linked (GlcNAc...) asparagine glycan. Asn630 carries an N-linked (GlcNAc...) asparagine glycan. Residues Phe654–Ile674 traverse the membrane as a helical segment. The Cytoplasmic segment spans residues Leu675–Val1256. The tract at residues Lys677 to Arg690 is required for interaction with KPNB1 and EEA1. The short motif at Lys677–Arg690 is the Nuclear localization signal element. Residues Leu721–Val988 enclose the Protein kinase domain. Residues Leu727–Val735 and Lys754 each bind ATP. The active-site Proton acceptor is Asp846. Tyr878 carries the post-translational modification Phosphotyrosine. Positions Gly1030–Gly1180 are disordered. A phosphoserine mark is found at Ser1055, Ser1079, Ser1084, and Ser1108. The residue at position 1113 (Tyr1113) is a Phosphotyrosine. At Tyr1140 the chain carries Phosphotyrosine; by autocatalysis. Thr1167 carries the post-translational modification Phosphothreonine. The interval Glu1196 to Leu1198 is interaction with PIK3C2B. The residue at position 1197 (Tyr1197) is a Phosphotyrosine. 2 disordered regions span residues Pro1200–Asp1219 and Trp1224–Val1256. Phosphotyrosine; by autocatalysis is present on Tyr1249.

Belongs to the protein kinase superfamily. Tyr protein kinase family. EGF receptor subfamily. In terms of assembly, homodimer. Heterodimer with EGFR, ERBB3 and ERBB4. Part of a complex with EGFR and either PIK3C2A or PIK3C2B. May interact with PIK3C2B when phosphorylated on Tyr-1197. Interacts with PLXNB1. Interacts (when phosphorylated on Tyr-1249) with MEMO1. Interacts with MUC1. Interacts (when phosphorylated on Tyr-1140) with GRB7 (via SH2 domain). Interacts (when phosphorylated on Tyr-1249) with ERBIN. Interacts with KPNB1, RANBP2, EEA1, CRM1, CLTC, PTK6, RPA194 and ACTB. Interacts (preferentially with the tyrosine phosphorylated form) with CPNE3; this interaction occurs at the cell membrane and is increased in a growth factor heregulin-dependent manner. Interacts with HSP90AA1 and HSP90AB1 in an ATP-dependent manner; the interaction suppresses ERBB2 kinase activity. Interacts with SRC. Interacts with MYOC. Interacts with PRKCABP. Interacts with SORL1; this interaction regulates ERBB2 subcellular distribution by promoting its recycling after internalization from endosomes back to the plasma membrane, hence stimulates ERBB2-mediated signaling. Interacts with SH3BGRL. Interacts with ROR1. In terms of processing, autophosphorylated. Autophosphorylation occurs in trans, i.e. one subunit of the dimeric receptor phosphorylates tyrosine residues on the other subunit. Ligand-binding increases phosphorylation on tyrosine residues. Signaling via SEMA4C promotes phosphorylation at Tyr-1249. Dephosphorylated by PTPN12. In terms of tissue distribution, expressed predominantly in uterine epithelial cells. In the muscle, expression localizes to the synaptic sites of muscle fibers.

It localises to the cell membrane. Its subcellular location is the cell projection. The protein localises to the ruffle membrane. The protein resides in the early endosome. It is found in the cytoplasm. It localises to the perinuclear region. Its subcellular location is the nucleus. It carries out the reaction L-tyrosyl-[protein] + ATP = O-phospho-L-tyrosyl-[protein] + ADP + H(+). In terms of biological role, protein tyrosine kinase that is part of several cell surface receptor complexes, but that apparently needs a coreceptor for ligand binding. Essential component of a neuregulin-receptor complex, although neuregulins do not interact with it alone. GP30 is a potential ligand for this receptor. Regulates outgrowth and stabilization of peripheral microtubules (MTs). Upon ERBB2 activation, the MEMO1-RHOA-DIAPH1 signaling pathway elicits the phosphorylation and thus the inhibition of GSK3B at cell membrane. This prevents the phosphorylation of APC and CLASP2, allowing its association with the cell membrane. In turn, membrane-bound APC allows the localization of MACF1 to the cell membrane, which is required for microtubule capture and stabilization. Its function is as follows. In the nucleus is involved in transcriptional regulation. Associates with the 5'-TCAAATTC-3' sequence in the PTGS2/COX-2 promoter and activates its transcription. Implicated in transcriptional activation of CDKN1A; the function involves STAT3 and SRC. Involved in the transcription of rRNA genes by RNA Pol I and enhances protein synthesis and cell growth. In Mus musculus (Mouse), this protein is Receptor tyrosine-protein kinase erbB-2 (Erbb2).